Reading from the N-terminus, the 346-residue chain is MANAYKQAGVDIEAGYEAVSRMKKHVQTTMRKEVLGGLGGFGGMFDLSKFALEEPVLVSGTDGVGTKLMLAFMADKHDTIGIDAVAMCVNDIVVQGAEPLFFLDYIACGKAEPSKIENIVKGISEGCRQAGCALIGGETAEMPGMYSTEEYDLAGFTVGIVDKKKIVTGEKIEAGHVLIGLASSGIHSNGYSLVRKVLLEDGELSLDRIYGRLELPLGEELLKPTKIYVKPILELLKNHEVYGMAHITGGGFIENIPRMLPEGIGAEIELGSWKIQPIFSLLQEVGKLEEKEMFNIFNMGIGMVVAVKEEDAKDIVRLLEEQGETARIIGRTVQGAGVTFNGGKAL.

Belongs to the AIR synthase family.

Its subcellular location is the cytoplasm. It catalyses the reaction 2-formamido-N(1)-(5-O-phospho-beta-D-ribosyl)acetamidine + ATP = 5-amino-1-(5-phospho-beta-D-ribosyl)imidazole + ADP + phosphate + H(+). It participates in purine metabolism; IMP biosynthesis via de novo pathway; 5-amino-1-(5-phospho-D-ribosyl)imidazole from N(2)-formyl-N(1)-(5-phospho-D-ribosyl)glycinamide: step 2/2. This chain is Phosphoribosylformylglycinamidine cyclo-ligase, found in Bacillus anthracis (strain A0248).